A 375-amino-acid chain; its full sequence is MSDVIALAKDLIRRPSVTPQDEGCQTLMSERLARLGFVIEPMVFEDTTNLWARRGSEGPLFCFAGHTDVVPAGPLEKWHTPPFEPTIQDGVLYGRGAADMKGSLAAMVVAVERFVAEHPDHKGSIAFLITSDEEGPFINGTVRVIDTLEARNEKIRWCIVGEPSSTHVVGDVVKNGRRGSITGDLLVRGVQGHVAYPHLADNPIHKAAPALTELAATVWDEGNAYFPPTSFQIANIQAGTGASNVIPGELQVQFNFRFSTQLTDMDIRERVQALLDKHGLDYELTWTLSGQPFLTDTGALLEATVAAVAAVNGQQPALLTTGGTSDGRFIAPTGAEVIELGPVNATIHKVNECVKAEDLDLLAEMYQGVLERLLA.

His-66 lines the Zn(2+) pocket. Asp-68 is a catalytic residue. Asp-99 serves as a coordination point for Zn(2+). The active-site Proton acceptor is the Glu-133. The Zn(2+) site is built by Glu-134, Glu-162, and His-348.

The protein belongs to the peptidase M20A family. DapE subfamily. As to quaternary structure, homodimer. Zn(2+) is required as a cofactor. The cofactor is Co(2+).

It catalyses the reaction N-succinyl-(2S,6S)-2,6-diaminopimelate + H2O = (2S,6S)-2,6-diaminopimelate + succinate. It functions in the pathway amino-acid biosynthesis; L-lysine biosynthesis via DAP pathway; LL-2,6-diaminopimelate from (S)-tetrahydrodipicolinate (succinylase route): step 3/3. Functionally, catalyzes the hydrolysis of N-succinyl-L,L-diaminopimelic acid (SDAP), forming succinate and LL-2,6-diaminopimelate (DAP), an intermediate involved in the bacterial biosynthesis of lysine and meso-diaminopimelic acid, an essential component of bacterial cell walls. In Aeromonas salmonicida (strain A449), this protein is Succinyl-diaminopimelate desuccinylase.